The chain runs to 79 residues: Panulirin (79 aa).

The first 22 residues, 1 to 22 (MKNKAVLMLMALFLVAVTQVHG), serve as a signal peptide directing secretion. Residues 23 to 26 (DPEP) constitute a propeptide that is removed on maturation. 3 disulfides stabilise this stretch: cysteine 33–cysteine 63, cysteine 40–cysteine 56, and cysteine 46–cysteine 64. A propeptide spanning residues 75 to 79 (QLLAA) is cleaved from the precursor.

In terms of assembly, monomer. Post-translationally, contains 3 disulfide bonds. Expressed in hemocytes (at protein level).

Involved in the melanization cascade in response to lipopolysaccharide (LPS). In vitro, reversibly and competitively inhibits trypsin (Ki=8.6 nM) but not serine proteases chymotrypsin, elastase, subtilisin, thrombin and plasmin, cysteine peptidase papain or metallopeptidase carboxypeptidase A. The protein is Panulirin of Panulirus argus (Caribbean spiny lobster).